Reading from the N-terminus, the 144-residue chain is Sentan (144 aa).

A disordered region spans residues 1–31 (MCGCRASVPSTKHYSVNPAPTTRSPPAAAGM). Over residues 18-29 (PAPTTRSPPAAA) the composition is skewed to low complexity.

The protein belongs to the S-100 family.

Its subcellular location is the cell projection. The protein resides in the cilium. May be a component of the linker structure that bridges the ciliary membrane and peripheral singlet microtubules. The polypeptide is Sentan (Gallus gallus (Chicken)).